A 1085-amino-acid polypeptide reads, in one-letter code: Cell wall protein IFF6 (1085 aa).

Positions 1–19 are cleaved as a signal peptide; that stretch reads MLLKQIFLPFFVLFNAINA. The segment at 339–1060 is disordered; sequence PSPGTDESSS…SSNSATIPEQ (722 aa). Residues 342-528 are compositionally biased toward low complexity; the sequence is GTDESSSLSS…QSSSGTGQSS (187 aa). The span at 529 to 538 shows a compositional bias: acidic residues; sequence TEDEPIDSTE. A compositionally biased stretch (low complexity) spans 539 to 828; that stretch reads SDTSSATDSS…TVTNTATNTG (290 aa). N-linked (GlcNAc...) asparagine glycosylation is found at asparagine 659, asparagine 782, asparagine 854, asparagine 860, asparagine 864, asparagine 874, asparagine 882, asparagine 886, asparagine 890, asparagine 896, asparagine 900, asparagine 910, asparagine 924, asparagine 932, asparagine 938, asparagine 952, asparagine 960, asparagine 964, asparagine 968, asparagine 976, asparagine 980, asparagine 992, asparagine 996, asparagine 1008, and asparagine 1016. The span at 847 to 1010 shows a compositional bias: gly residues; it reads NNGGGSNNGS…GSGSGSGNGS (164 aa). Over residues 1018 to 1028 the composition is skewed to gly residues; that stretch reads SGSGSGSGNGQ. Over residues 1031–1052 the composition is skewed to low complexity; it reads GIITSSIGQPGSSTSTQGPSSS. Residue asparagine 1062 is the site of GPI-anchor amidated asparagine attachment. The propeptide at 1063–1085 is removed in mature form; sequence SGNHIKFTLFNGLLIGLVPIVFM.

It belongs to the HYR1/IFF family. In terms of processing, the GPI-anchor is attached to the protein in the endoplasmic reticulum and serves to target the protein to the cell surface. There, the glucosamine-inositol phospholipid moiety is cleaved off and the GPI-modified mannoprotein is covalently attached via its lipidless GPI glycan remnant to the 1,6-beta-glucan of the outer cell wall layer.

Its subcellular location is the secreted. The protein resides in the cell wall. It localises to the membrane. GPI-anchored cell wall protein involved in cell wall organization, hyphal growth, as well as in host-fungal interaction and virulence. This is Cell wall protein IFF6 (IFF6) from Candida albicans (strain SC5314 / ATCC MYA-2876) (Yeast).